We begin with the raw amino-acid sequence, 142 residues long: Large ribosomal subunit protein uL13 (142 aa).

Belongs to the universal ribosomal protein uL13 family. As to quaternary structure, part of the 50S ribosomal subunit.

This protein is one of the early assembly proteins of the 50S ribosomal subunit, although it is not seen to bind rRNA by itself. It is important during the early stages of 50S assembly. This is Large ribosomal subunit protein uL13 from Paraburkholderia phytofirmans (strain DSM 17436 / LMG 22146 / PsJN) (Burkholderia phytofirmans).